The chain runs to 330 residues: Aspartate--ammonia ligase (330 aa).

This sequence belongs to the class-II aminoacyl-tRNA synthetase family. AsnA subfamily.

It localises to the cytoplasm. It catalyses the reaction L-aspartate + NH4(+) + ATP = L-asparagine + AMP + diphosphate + H(+). It functions in the pathway amino-acid biosynthesis; L-asparagine biosynthesis; L-asparagine from L-aspartate (ammonia route): step 1/1. This chain is Aspartate--ammonia ligase, found in Klebsiella pneumoniae (strain 342).